We begin with the raw amino-acid sequence, 173 residues long: dCTP deaminase, dUMP-forming (173 aa).

DCTP is bound by residues 93–98 (RSSIGR), Asp-111, 119–121 (TLE), and Gln-138. The active-site Proton donor/acceptor is the Glu-121.

This sequence belongs to the dCTP deaminase family. Homotrimer.

It carries out the reaction dCTP + 2 H2O = dUMP + NH4(+) + diphosphate. It participates in pyrimidine metabolism; dUMP biosynthesis; dUMP from dCTP: step 1/1. Functionally, bifunctional enzyme that catalyzes both the deamination of dCTP to dUTP and the hydrolysis of dUTP to dUMP without releasing the toxic dUTP intermediate. The chain is dCTP deaminase, dUMP-forming from Leptospira interrogans serogroup Icterohaemorrhagiae serovar copenhageni (strain Fiocruz L1-130).